Consider the following 232-residue polypeptide: UPF0173 metal-dependent hydrolase Msil_0741 (232 aa).

This sequence belongs to the UPF0173 family.

The chain is UPF0173 metal-dependent hydrolase Msil_0741 from Methylocella silvestris (strain DSM 15510 / CIP 108128 / LMG 27833 / NCIMB 13906 / BL2).